The primary structure comprises 216 residues: MQAFTFHEGLVAPLDRENVDTDLIIPKQFLKSIKRTGFGPNLFDELRYLDHGEPGMDNSKRPLNPDFVLNQPRYQGASILLGRKNFGCGSSREHAPWALQQYGFRAIIAPSYADIFFNNSFKNGLLPIVLTELEVARLFDEVKAFPGYKLKVDLERQVVIAADGREMAFEVDAFRKYCLLNGFDDIGLTLRQSDKIRAFEAERLARHPWLESRPVA.

The protein belongs to the LeuD family. LeuD type 1 subfamily. In terms of assembly, heterodimer of LeuC and LeuD.

It carries out the reaction (2R,3S)-3-isopropylmalate = (2S)-2-isopropylmalate. Its pathway is amino-acid biosynthesis; L-leucine biosynthesis; L-leucine from 3-methyl-2-oxobutanoate: step 2/4. Functionally, catalyzes the isomerization between 2-isopropylmalate and 3-isopropylmalate, via the formation of 2-isopropylmaleate. The sequence is that of 3-isopropylmalate dehydratase small subunit from Bordetella avium (strain 197N).